The primary structure comprises 219 residues: Mediator of RNA polymerase II transcription subunit 20 (219 aa).

Belongs to the Mediator complex subunit 20 family. In terms of assembly, component of the Mediator complex.

It localises to the nucleus. Functionally, component of the Mediator complex, a coactivator involved in the regulated transcription of nearly all RNA polymerase II-dependent genes. Mediator functions as a bridge to convey information from gene-specific regulatory proteins to the basal RNA polymerase II transcription machinery. Mediator is recruited to promoters by direct interactions with regulatory proteins and serves as a scaffold for the assembly of a functional preinitiation complex with RNA polymerase II and the general transcription factors. The protein is Mediator of RNA polymerase II transcription subunit 20 (MED20) of Aedes aegypti (Yellowfever mosquito).